Reading from the N-terminus, the 202-residue chain is NADH-quinone oxidoreductase subunit C (202 aa).

It belongs to the complex I 30 kDa subunit family. In terms of assembly, NDH-1 is composed of 14 different subunits. Subunits NuoB, C, D, E, F, and G constitute the peripheral sector of the complex.

It is found in the cell inner membrane. The catalysed reaction is a quinone + NADH + 5 H(+)(in) = a quinol + NAD(+) + 4 H(+)(out). Functionally, NDH-1 shuttles electrons from NADH, via FMN and iron-sulfur (Fe-S) centers, to quinones in the respiratory chain. The immediate electron acceptor for the enzyme in this species is believed to be ubiquinone. Couples the redox reaction to proton translocation (for every two electrons transferred, four hydrogen ions are translocated across the cytoplasmic membrane), and thus conserves the redox energy in a proton gradient. The sequence is that of NADH-quinone oxidoreductase subunit C from Hyphomonas neptunium (strain ATCC 15444).